We begin with the raw amino-acid sequence, 522 residues long: Protein nucleotidyltransferase YdiU (522 aa).

Residues Gly109, Gly111, Arg112, Lys132, Asp144, Gly145, Arg195, and Arg202 each contribute to the ATP site. The active-site Proton acceptor is the Asp271. Mg(2+) is bound by residues Asn272 and Asp281. Asp281 is a binding site for ATP.

The protein belongs to the SELO family. The cofactor is Mg(2+). Mn(2+) serves as cofactor.

It catalyses the reaction L-seryl-[protein] + ATP = 3-O-(5'-adenylyl)-L-seryl-[protein] + diphosphate. The enzyme catalyses L-threonyl-[protein] + ATP = 3-O-(5'-adenylyl)-L-threonyl-[protein] + diphosphate. The catalysed reaction is L-tyrosyl-[protein] + ATP = O-(5'-adenylyl)-L-tyrosyl-[protein] + diphosphate. It carries out the reaction L-histidyl-[protein] + UTP = N(tele)-(5'-uridylyl)-L-histidyl-[protein] + diphosphate. It catalyses the reaction L-seryl-[protein] + UTP = O-(5'-uridylyl)-L-seryl-[protein] + diphosphate. The enzyme catalyses L-tyrosyl-[protein] + UTP = O-(5'-uridylyl)-L-tyrosyl-[protein] + diphosphate. Its function is as follows. Nucleotidyltransferase involved in the post-translational modification of proteins. It can catalyze the addition of adenosine monophosphate (AMP) or uridine monophosphate (UMP) to a protein, resulting in modifications known as AMPylation and UMPylation. This chain is Protein nucleotidyltransferase YdiU, found in Burkholderia lata (strain ATCC 17760 / DSM 23089 / LMG 22485 / NCIMB 9086 / R18194 / 383).